Here is a 433-residue protein sequence, read N- to C-terminus: Serine/threonine-protein kinase Sgk1 (433 aa).

Residues 66–92 are disordered; that stretch reads QDVELMNSNPSPPPSPSQQINLGPSSN. A compositionally biased stretch (polar residues) spans 83–92; it reads QQINLGPSSN. The Protein kinase domain occupies 100 to 357; that stretch reads FDFLKVIGKG…FTEIKNHMFF (258 aa). ATP contacts are provided by residues 106–114 and Lys-129; that span reads IGKGSFGKV. Asp-224 functions as the Proton acceptor in the catalytic mechanism. Residues 358 to 433 form the AGC-kinase C-terminal domain; sequence SPINWDDLNA…SYAPAMDSYL (76 aa).

The protein belongs to the protein kinase superfamily. AGC Ser/Thr protein kinase family.

The protein localises to the cytoplasm. The protein resides in the nucleus. It is found in the endoplasmic reticulum. The catalysed reaction is L-seryl-[protein] + ATP = O-phospho-L-seryl-[protein] + ADP + H(+). It catalyses the reaction L-threonyl-[protein] + ATP = O-phospho-L-threonyl-[protein] + ADP + H(+). Protein kinase that may play an important role in cellular stress response. May be involved in the regulation of processes such as cell survival, neuronal excitability and renal sodium excretion. The protein is Serine/threonine-protein kinase Sgk1 (sgk1) of Danio rerio (Zebrafish).